The chain runs to 177 residues: NADH-quinone oxidoreductase subunit B (177 aa).

Residues Cys56, Cys57, Cys121, and Cys151 each coordinate [4Fe-4S] cluster.

This sequence belongs to the complex I 20 kDa subunit family. As to quaternary structure, NDH-1 is composed of 14 different subunits. Subunits NuoB, C, D, E, F, and G constitute the peripheral sector of the complex. [4Fe-4S] cluster serves as cofactor.

The protein resides in the cell inner membrane. It carries out the reaction a quinone + NADH + 5 H(+)(in) = a quinol + NAD(+) + 4 H(+)(out). Its function is as follows. NDH-1 shuttles electrons from NADH, via FMN and iron-sulfur (Fe-S) centers, to quinones in the respiratory chain. Couples the redox reaction to proton translocation (for every two electrons transferred, four hydrogen ions are translocated across the cytoplasmic membrane), and thus conserves the redox energy in a proton gradient. The chain is NADH-quinone oxidoreductase subunit B from Dinoroseobacter shibae (strain DSM 16493 / NCIMB 14021 / DFL 12).